The primary structure comprises 168 residues: MAAADVEYRCFVGGLAWATNNETLEQAFANFGQVIDSKVITDRETGRSRGFGFVTFSSEQSMLDAIENMNGKELDGRNITVNQAQSRGGGGGGGGYGGGGGGYGGREGGGYGGGGGGYGGRREGGGGYGGGGYGGGGGGYGGREGGGGYGGGGGYGGNRGDSGGNWRN.

The 79-residue stretch at 8–86 (YRCFVGGLAW…RNITVNQAQS (79 aa)) folds into the RRM domain. Residues 148–168 (GYGGGGGYGGNRGDSGGNWRN) form a disordered region.

Its function is as follows. Possibly has a role in RNA transcription or processing during stress. This chain is Glycine-rich RNA-binding protein 2 (GRP2), found in Sorghum bicolor (Sorghum).